We begin with the raw amino-acid sequence, 287 residues long: Small ribosomal subunit protein uS2 (287 aa).

Positions 235–287 (ESGFATGGGDWEATAPAAASGWDDAAAQPQNWDSAAQGAASWDEAAAPKEGQW) are disordered. The segment covering 247 to 261 (ATAPAAASGWDDAAA) has biased composition (low complexity).

Belongs to the universal ribosomal protein uS2 family. As to quaternary structure, component of the small ribosomal subunit. Mature ribosomes consist of a small (40S) and a large (60S) subunit. The 40S subunit contains about 33 different proteins and 1 molecule of RNA (18S). The 60S subunit contains about 49 different proteins and 3 molecules of RNA (25S, 5.8S and 5S). Interacts with RPS21.

The protein resides in the cytoplasm. Required for the assembly and/or stability of the 40S ribosomal subunit. Required for the processing of the 20S rRNA-precursor to mature 18S rRNA in a late step of the maturation of 40S ribosomal subunits. The protein is Small ribosomal subunit protein uS2 of Pyricularia oryzae (strain 70-15 / ATCC MYA-4617 / FGSC 8958) (Rice blast fungus).